The sequence spans 523 residues: Sugar carrier protein C (523 aa).

The Cytoplasmic segment spans residues 1–25 (MPAVGGIPPSGGNRKVYPGNLTLYV). The next 12 helical transmembrane spans lie at 26 to 46 (TVTCVVAAMGGLIFGYDIGIS), 86 to 106 (MFTSSLYLAALIASLVASTIT), 120 to 140 (VLFCAGAIINGAAKAVWMLIL), 143 to 163 (ILLGFGIGFANQSVPLYLSEM), 172 to 192 (LNIGFQLSITIGILVANVLNY), 205 to 225 (LSLGGAMVPALIITVGSLVLP), 298 to 320 (LTGINVIMFYAPVLFDTIGFGSD), 327 to 347 (VITGLVNVFATMVSIYGVDKW), 351 to 371 (FLFLEGGVQMLICQAIVAACI), 387 to 407 (WYAVVVVLFICIYVSGFAWSW), 433 to 453 (SVNMFFTFVVAQVFLIMLCHL), and 456 to 476 (GLFIFFSFFVLIMSIFVYYFL). At 477-523 (PETKGIPIEEMGQVWKQHWYWSRYVVDEDYPNGGLEMGKEGRIPKNV) the chain is on the cytoplasmic side.

It belongs to the major facilitator superfamily. Sugar transporter (TC 2.A.1.1) family.

The protein resides in the membrane. The sequence is that of Sugar carrier protein C (STC) from Ricinus communis (Castor bean).